Reading from the N-terminus, the 1202-residue chain is Adenine-specific methyltransferase PglX (1202 aa).

This sequence belongs to the methyltransferase superfamily. PglX adenine methyltransferase family.

The catalysed reaction is a 2'-deoxyadenosine in DNA + S-adenosyl-L-methionine = an N(6)-methyl-2'-deoxyadenosine in DNA + S-adenosyl-L-homocysteine + H(+). In terms of biological role, BREX systems (bacteriophage exclusion) provide immunity against bacteriophage. Part of a type 1 BREX system which protects against dsDNA phage. This system allows phage adsorption but prevents phage DNA replication, without degradation of the phage DNA. Methylation of bacterial DNA by this protein guides self/non-self discrimination. Probably methylates the adenine in the fifth position of the hexamer 5'-ACRCAG-3' in genomic DNA. N(6)-methylated adenine on the fifth position of 5'-ACRCAG-3' is found in the genome; there are 1906 sites in the genomic DNA. The sequence is that of Adenine-specific methyltransferase PglX from Lacticaseibacillus casei (strain Zhang) (Lactobacillus casei).